A 479-amino-acid polypeptide reads, in one-letter code: FAD-dependent monooxygenase ausM (479 aa).

3 residues coordinate FAD: E40, G54, and R113. The active site involves Y224. N289 carries an N-linked (GlcNAc...) asparagine glycan. Residues D316 and A329 each coordinate FAD. A helical transmembrane segment spans residues 449–469 (TLPWLVISLPVLASMLCYLVY).

Belongs to the paxM FAD-dependent monooxygenase family. FAD serves as cofactor.

The protein localises to the membrane. The protein operates within secondary metabolite biosynthesis; terpenoid biosynthesis. Its function is as follows. FAD-dependent monooxygenase; part of the gene cluster B that mediates the biosynthesis of austinol and dehydroaustinol, two fungal meroterpenoids. The first step of the pathway is the synthesis of 3,5-dimethylorsellinic acid by the polyketide synthase ausA. 3,5-dimethylorsellinic acid is then prenylated by the polyprenyl transferase ausN. Further epoxidation by the FAD-dependent monooxygenase ausM and cyclization by the probable terpene cyclase ausL lead to the formation of protoaustinoid A. Protoaustinoid A is then oxidized to spiro-lactone preaustinoid A3 by the combined action of the FAD-binding monooxygenases ausB and ausC, and the dioxygenase ausE. Acid-catalyzed keto-rearrangement and ring contraction of the tetraketide portion of preaustinoid A3 by ausJ lead to the formation of preaustinoid A4. The aldo-keto reductase ausK, with the help of ausH, is involved in the next step by transforming preaustinoid A4 into isoaustinone which is in turn hydroxylated by the P450 monooxygenase ausI to form austinolide. Finally, the cytochrome P450 monooxygenase ausG modifies austinolide to austinol. Austinol can be further modified to dehydroaustinol which forms a diffusible complex with diorcinol that initiates conidiation. Due to genetic rearrangements of the clusters and the subsequent loss of some enzymes, the end products of the Emericella nidulans austinoid biosynthesis clusters are austinol and dehydroaustinol, even if additional enzymes, such as the O-acetyltransferase ausQ and the cytochrome P450 monooxygenase ausR are still functional. The protein is FAD-dependent monooxygenase ausM of Emericella nidulans (strain FGSC A4 / ATCC 38163 / CBS 112.46 / NRRL 194 / M139) (Aspergillus nidulans).